Consider the following 666-residue polypeptide: ATP-dependent zinc metalloprotease FtsH (666 aa).

Residues 1 to 6 (MKSETG) lie on the Cytoplasmic side of the membrane. The chain crosses the membrane as a helical span at residues 7–27 (YMGFVVVLVFMVLLALQLATL). Topologically, residues 28 to 116 (SAPATQIAYS…TRYRGADDDT (89 aa)) are periplasmic. A helical transmembrane segment spans residues 117 to 137 (WIGTLASWIVPIAVFALVWNL). The Cytoplasmic segment spans residues 138–666 (MLRRPRGGLQ…ADNADHSVPQ (529 aa)). Residue 210 to 217 (GAPGTGKT) participates in ATP binding. Histidine 432 serves as a coordination point for Zn(2+). Glutamate 433 is an active-site residue. Zn(2+)-binding residues include histidine 436 and aspartate 509. The segment at 612 to 666 (NDEPTPEPGARDPGGDAAKRSGIGAAPAKPPAEVGSAELRDPARKADNADHSVPQ) is disordered. Basic and acidic residues-rich tracts occupy residues 620 to 630 (GARDPGGDAAK) and 649 to 666 (ELRD…SVPQ).

In the central section; belongs to the AAA ATPase family. This sequence in the C-terminal section; belongs to the peptidase M41 family. In terms of assembly, homohexamer. Zn(2+) is required as a cofactor.

The protein resides in the cell inner membrane. In terms of biological role, acts as a processive, ATP-dependent zinc metallopeptidase for both cytoplasmic and membrane proteins. Plays a role in the quality control of integral membrane proteins. The polypeptide is ATP-dependent zinc metalloprotease FtsH (Burkholderia pseudomallei (strain 1710b)).